A 474-amino-acid chain; its full sequence is Cysteine--tRNA ligase (474 aa).

Cys28 is a binding site for Zn(2+). A 'HIGH' region motif is present at residues 30 to 40 (ITVYDLCHLGH). Positions 209, 234, and 238 each coordinate Zn(2+). The 'KMSKS' region motif lies at 269-273 (KMSKS). Lys272 contacts ATP.

This sequence belongs to the class-I aminoacyl-tRNA synthetase family. Monomer. Zn(2+) serves as cofactor.

It is found in the cytoplasm. The catalysed reaction is tRNA(Cys) + L-cysteine + ATP = L-cysteinyl-tRNA(Cys) + AMP + diphosphate. This chain is Cysteine--tRNA ligase, found in Blochmanniella floridana.